We begin with the raw amino-acid sequence, 148 residues long: MKSVGVFALIISFSIVAESKIYTRCKLAKIFAKAGLDNYGGFALGNWLCMAYYESHYNTTAENVLEDGSTDYGIFQINSFTWCRNARKHQKNHCHVACSALITDDLTDAILCAKKIVKETQGMNYWQGWKKNCENKDMSEWKRGCEVS.

The first 19 residues, 1–19 (MKSVGVFALIISFSIVAES), serve as a signal peptide directing secretion. The 129-residue stretch at 20–148 (KIYTRCKLAK…SEWKRGCEVS (129 aa)) folds into the C-type lysozyme domain. Intrachain disulfides connect Cys25/Cys145, Cys49/Cys133, Cys83/Cys98, and Cys94/Cys112. The active site involves Glu54. The N-linked (GlcNAc...) asparagine glycan is linked to Asn58. Residue Asp71 is part of the active site.

This sequence belongs to the glycosyl hydrolase 22 family. As to quaternary structure, monomer.

It is found in the secreted. The enzyme catalyses Hydrolysis of (1-&gt;4)-beta-linkages between N-acetylmuramic acid and N-acetyl-D-glucosamine residues in a peptidoglycan and between N-acetyl-D-glucosamine residues in chitodextrins.. The sequence is that of Lysozyme-like protein 1 (Lyzl1) from Mus musculus (Mouse).